The chain runs to 446 residues: MTNKPSAATGRNVVVVGTQWGDEGKGKLVDWLTEMSQGVVRFQGGHNAGHTLVINGVKTALHLIPSGIMRPGVKCYIGNGVVLSAAKLFEEIEGLEKAGVEVRSRLRISEACPLILPFHAAIDIARETFREKGGTEKIGTTGRGIGPAYEDKIARRALRVQDLKYPERFAAKLRELLELHNFVLTGFLNAPAVDFDTVYNEAMLHAELLKPMMADVSRELNDAHQAGANLLFEGAQGTLLDVDHGTYPYVTSSNCVAGNAAAGAGVGPGMLHYILGITKAYCTRVGGGPFPTELDWENPGTVGYHLSSVGAEKGVTTGRSRRCGWFDAALLKRSAQVNGLSGLCITKLDVLDGIEELKLCTGYELDGQTTDILPMGADDIARCVPIYETMPGWSQTTVGVTEYDKLPAAAQRYLQRIEEVTGVPVHMISTSPDRDHTILLRNPYAA.

Residues glycine 21 to lysine 27 and glycine 49 to threonine 51 contribute to the GTP site. The active-site Proton acceptor is aspartate 22. Residues aspartate 22 and glycine 49 each coordinate Mg(2+). IMP contacts are provided by residues aspartate 22–lysine 25, asparagine 47–histidine 50, threonine 141, arginine 155, glutamine 236, threonine 251, and arginine 319. The active-site Proton donor is histidine 50. Substrate is bound at residue valine 315–arginine 321. GTP contacts are provided by residues arginine 321, lysine 347 to aspartate 349, and serine 429 to serine 431.

It belongs to the adenylosuccinate synthetase family. In terms of assembly, homodimer. Mg(2+) serves as cofactor.

Its subcellular location is the cytoplasm. The enzyme catalyses IMP + L-aspartate + GTP = N(6)-(1,2-dicarboxyethyl)-AMP + GDP + phosphate + 2 H(+). It functions in the pathway purine metabolism; AMP biosynthesis via de novo pathway; AMP from IMP: step 1/2. Its function is as follows. Plays an important role in the de novo pathway of purine nucleotide biosynthesis. Catalyzes the first committed step in the biosynthesis of AMP from IMP. This chain is Adenylosuccinate synthetase, found in Polaromonas naphthalenivorans (strain CJ2).